Here is a 312-residue protein sequence, read N- to C-terminus: MASGNCTTPTTFILSGLTDNPGLQMPLFMVFLAIYTITLLTNLGLIALISIDLQLQTPMYIFLQNLSFTDAVYSTVITPKMLATFLEETKTISYVGCILQYFSFVLLTVRECLLLAVMAYDRYAAICKPLLYPAIMTKAVCWRLVKGLYSLAFLNFLVHTSGLLKLSFCSSNVVNHFFCDNSPLFQISSSSTALNELLVFIFGSLFVMSSIITILISYVFIILTVVRIRSKERKYKAFSTCTSHLMAVSLFHGTIVFMYFQPANNFSLDKDKIMSLFYTVVIPMLNPLIYSWRNKEVKDALHRAIATAVLFH.

At 1–26 (MASGNCTTPTTFILSGLTDNPGLQMP) the chain is on the extracellular side. An N-linked (GlcNAc...) asparagine glycan is attached at N5. The chain crosses the membrane as a helical span at residues 27–49 (LFMVFLAIYTITLLTNLGLIALI). Over 50–57 (SIDLQLQT) the chain is Cytoplasmic. A helical membrane pass occupies residues 58-79 (PMYIFLQNLSFTDAVYSTVITP). The Extracellular segment spans residues 80–100 (KMLATFLEETKTISYVGCILQ). Residues C97 and C179 are joined by a disulfide bond. The chain crosses the membrane as a helical span at residues 101-120 (YFSFVLLTVRECLLLAVMAY). The Cytoplasmic portion of the chain corresponds to 121-139 (DRYAAICKPLLYPAIMTKA). A helical transmembrane segment spans residues 140–164 (VCWRLVKGLYSLAFLNFLVHTSGLL). Topologically, residues 165–205 (KLSFCSSNVVNHFFCDNSPLFQISSSSTALNELLVFIFGSL) are extracellular. The chain crosses the membrane as a helical span at residues 206 to 226 (FVMSSIITILISYVFIILTVV). Residues 227–239 (RIRSKERKYKAFS) are Cytoplasmic-facing. The helical transmembrane segment at 240 to 260 (TCTSHLMAVSLFHGTIVFMYF) threads the bilayer. The Extracellular segment spans residues 261 to 271 (QPANNFSLDKD). The chain crosses the membrane as a helical span at residues 272-292 (KIMSLFYTVVIPMLNPLIYSW). Residues 293–312 (RNKEVKDALHRAIATAVLFH) lie on the Cytoplasmic side of the membrane.

Belongs to the G-protein coupled receptor 1 family.

The protein localises to the cell membrane. Odorant receptor. In Gallus gallus (Chicken), this protein is Olfactory receptor-like protein COR6 (COR6).